The primary structure comprises 468 residues: Peroxisome proliferator-activated receptor alpha (468 aa).

The nuclear receptor DNA-binding region spans 99 to 173; sequence NIECRICGDK…VGMSHNAIRF (75 aa). 2 NR C4-type zinc fingers span residues 102–122 and 139–161; these read CRICGDKASGYHYGVHACEGC and CDRSCKIQKKNRNKCQYCRFHKC. The NR LBD domain maps to 239–466; sequence FVIHDMETLC…HPLLQEIYRD (228 aa). The tract at residues 304–433 is required for heterodimerization with RXRA; the sequence is DQVTLLKYGV…PKLLQKMVDL (130 aa).

This sequence belongs to the nuclear hormone receptor family. NR1 subfamily. Heterodimer; with RXRA. This heterodimerization is required for DNA binding and transactivation activity. Interacts with NCOA3 coactivator. Interacts with CITED2; the interaction stimulates its transcriptional activity. Also interacts with PPARBP in vitro. Interacts with AKAP13, LPIN1, PRDM16 and coactivator NCOA6. Interacts with ASXL1 and ASXL2. Interacts with PER2. Interacts with SIRT1; the interaction seems to be modulated by NAD(+) levels. Interacts with CRY1 and CRY2. In hepatocytes, interacts with PAQR3 and HUWE1; the interactions promote PPARA poylubiquitination and HUWE1-mediated degradation. Post-translationally, ubiquitinated by E3 ubiquitin-protein ligase HUWE1; leading to proteasomal degradation. In terms of processing, phosphorylated. Highly expressed in liver, kidney and heart. Very weakly expressed in brain and testis.

The protein resides in the nucleus. Ligand-activated transcription factor. Key regulator of lipid metabolism. Activated by the endogenous ligand 1-palmitoyl-2-oleoyl-sn-glycerol-3-phosphocholine (16:0/18:1-GPC). Activated by oleylethanolamide, a naturally occurring lipid that regulates satiety. Receptor for peroxisome proliferators such as hypolipidemic drugs and fatty acids. Regulates the peroxisomal beta-oxidation pathway of fatty acids. Functions as a transcription activator for the ACOX1 and P450 genes. Transactivation activity requires heterodimerization with RXRA and is antagonized by NR2C2. May be required for the propagation of clock information to metabolic pathways regulated by PER2. The chain is Peroxisome proliferator-activated receptor alpha (Ppara) from Mus musculus (Mouse).